Reading from the N-terminus, the 122-residue chain is Large ribosomal subunit protein uL14 (122 aa).

It belongs to the universal ribosomal protein uL14 family. Part of the 50S ribosomal subunit. Forms a cluster with proteins L3 and L19. In the 70S ribosome, L14 and L19 interact and together make contacts with the 16S rRNA in bridges B5 and B8.

Its function is as follows. Binds to 23S rRNA. Forms part of two intersubunit bridges in the 70S ribosome. This chain is Large ribosomal subunit protein uL14, found in Halorhodospira halophila (strain DSM 244 / SL1) (Ectothiorhodospira halophila (strain DSM 244 / SL1)).